Here is a 456-residue protein sequence, read N- to C-terminus: UDP-N-acetylmuramate--L-alanine ligase (456 aa).

112–118 (GTHGKTT) contributes to the ATP binding site.

Belongs to the MurCDEF family.

Its subcellular location is the cytoplasm. The catalysed reaction is UDP-N-acetyl-alpha-D-muramate + L-alanine + ATP = UDP-N-acetyl-alpha-D-muramoyl-L-alanine + ADP + phosphate + H(+). It participates in cell wall biogenesis; peptidoglycan biosynthesis. Functionally, cell wall formation. The sequence is that of UDP-N-acetylmuramate--L-alanine ligase from Trichlorobacter lovleyi (strain ATCC BAA-1151 / DSM 17278 / SZ) (Geobacter lovleyi).